We begin with the raw amino-acid sequence, 119 residues long: Large ribosomal subunit protein bL20 (119 aa).

This sequence belongs to the bacterial ribosomal protein bL20 family.

In terms of biological role, binds directly to 23S ribosomal RNA and is necessary for the in vitro assembly process of the 50S ribosomal subunit. It is not involved in the protein synthesizing functions of that subunit. The sequence is that of Large ribosomal subunit protein bL20 from Aromatoleum aromaticum (strain DSM 19018 / LMG 30748 / EbN1) (Azoarcus sp. (strain EbN1)).